The sequence spans 208 residues: ATP-dependent Clp protease proteolytic subunit (208 aa).

The active-site Nucleophile is Ser98. His123 is a catalytic residue.

The protein belongs to the peptidase S14 family. In terms of assembly, fourteen ClpP subunits assemble into 2 heptameric rings which stack back to back to give a disk-like structure with a central cavity, resembling the structure of eukaryotic proteasomes.

The protein localises to the cytoplasm. It carries out the reaction Hydrolysis of proteins to small peptides in the presence of ATP and magnesium. alpha-casein is the usual test substrate. In the absence of ATP, only oligopeptides shorter than five residues are hydrolyzed (such as succinyl-Leu-Tyr-|-NHMec, and Leu-Tyr-Leu-|-Tyr-Trp, in which cleavage of the -Tyr-|-Leu- and -Tyr-|-Trp bonds also occurs).. Functionally, cleaves peptides in various proteins in a process that requires ATP hydrolysis. Has a chymotrypsin-like activity. Plays a major role in the degradation of misfolded proteins. This chain is ATP-dependent Clp protease proteolytic subunit, found in Wolbachia sp. subsp. Drosophila simulans (strain wRi).